The primary structure comprises 150 residues: Large ribosomal subunit protein bL9 (150 aa).

It belongs to the bacterial ribosomal protein bL9 family.

Functionally, binds to the 23S rRNA. This chain is Large ribosomal subunit protein bL9, found in Shewanella oneidensis (strain ATCC 700550 / JCM 31522 / CIP 106686 / LMG 19005 / NCIMB 14063 / MR-1).